The primary structure comprises 37 residues: Large ribosomal subunit protein bL36B (37 aa).

It belongs to the bacterial ribosomal protein bL36 family.

The sequence is that of Large ribosomal subunit protein bL36B from Paenarthrobacter aurescens (strain TC1).